We begin with the raw amino-acid sequence, 193 residues long: Pilin-like protein PilA2 (193 aa).

A propeptide spans 1–4 (MRKG) (leader sequence). Residue Leu5 is modified to N-methylleucine. A helical transmembrane segment spans residues 5 to 25 (LTLVEVLVTLVIMGIAFAALL).

The protein resides in the cell inner membrane. It localises to the cell outer membrane. The protein localises to the periplasm. Its function is as follows. Plays an essential role in natural DNA transformation but is not required for pilus biogenesis. The protein is Pilin-like protein PilA2 (pilA2) of Thermus thermophilus (strain ATCC BAA-163 / DSM 7039 / HB27).